A 491-amino-acid polypeptide reads, in one-letter code: ADP-specific phosphofructokinase (491 aa).

The region spanning 4–486 (EEWEQRHAEA…FVAMLAKIKQ (483 aa)) is the ADPK domain. Residues E281, E312, and D470 each contribute to the Mg(2+) site. The active-site Proton acceptor is D470.

Belongs to the carbohydrate kinase PfkC family. Mg(2+) serves as cofactor.

It localises to the cytoplasm. It catalyses the reaction beta-D-fructose 6-phosphate + ADP = beta-D-fructose 1,6-bisphosphate + AMP + H(+). The protein operates within carbohydrate degradation; glycolysis. Functionally, catalyzes the phosphorylation of fructose 6-phosphate to fructose 1,6-bisphosphate using ADP as the phosphate donor. This chain is ADP-specific phosphofructokinase, found in Methanosarcina acetivorans (strain ATCC 35395 / DSM 2834 / JCM 12185 / C2A).